An 881-amino-acid chain; its full sequence is Valine--tRNA ligase (881 aa).

A 'HIGH' region motif is present at residues 42–52 (PNITGDLHVGH). The 'KMSKS' region motif lies at 554–558 (KMSKS). Lys-557 is a binding site for ATP.

It belongs to the class-I aminoacyl-tRNA synthetase family. ValS type 1 subfamily. As to quaternary structure, monomer.

It localises to the cytoplasm. It catalyses the reaction tRNA(Val) + L-valine + ATP = L-valyl-tRNA(Val) + AMP + diphosphate. Its function is as follows. Catalyzes the attachment of valine to tRNA(Val). As ValRS can inadvertently accommodate and process structurally similar amino acids such as threonine, to avoid such errors, it has a 'posttransfer' editing activity that hydrolyzes mischarged Thr-tRNA(Val) in a tRNA-dependent manner. The sequence is that of Valine--tRNA ligase from Wigglesworthia glossinidia brevipalpis.